The chain runs to 173 residues: Transcription factor E (173 aa).

The region spanning alanine 9–tyrosine 92 is the HTH TFE/IIEalpha-type domain.

It belongs to the TFE family. In terms of assembly, monomer. Interaction with RNA polymerase subunits RpoF and RpoE is necessary for Tfe stimulatory transcription activity. Able to interact with Tbp and RNA polymerase in the absence of DNA promoter. Interacts both with the preinitiation and elongation complexes.

Functionally, transcription factor that plays a role in the activation of archaeal genes transcribed by RNA polymerase. Facilitates transcription initiation by enhancing TATA-box recognition by TATA-box-binding protein (Tbp), and transcription factor B (Tfb) and RNA polymerase recruitment. Not absolutely required for transcription in vitro, but particularly important in cases where Tbp or Tfb function is not optimal. It dynamically alters the nucleic acid-binding properties of RNA polymerases by stabilizing the initiation complex and destabilizing elongation complexes. Seems to translocate with the RNA polymerase following initiation and acts by binding to the non template strand of the transcription bubble in elongation complexes. The protein is Transcription factor E of Methanospirillum hungatei JF-1 (strain ATCC 27890 / DSM 864 / NBRC 100397 / JF-1).